A 323-amino-acid polypeptide reads, in one-letter code: Acetyl-coenzyme A carboxylase carboxyl transferase subunit alpha (323 aa).

A CoA carboxyltransferase C-terminal domain is found at 39–293 (RLAGKSQQLT…KRSLAESLRQ (255 aa)).

It belongs to the AccA family. As to quaternary structure, acetyl-CoA carboxylase is a heterohexamer composed of biotin carboxyl carrier protein (AccB), biotin carboxylase (AccC) and two subunits each of ACCase subunit alpha (AccA) and ACCase subunit beta (AccD).

It is found in the cytoplasm. It catalyses the reaction N(6)-carboxybiotinyl-L-lysyl-[protein] + acetyl-CoA = N(6)-biotinyl-L-lysyl-[protein] + malonyl-CoA. The protein operates within lipid metabolism; malonyl-CoA biosynthesis; malonyl-CoA from acetyl-CoA: step 1/1. Its function is as follows. Component of the acetyl coenzyme A carboxylase (ACC) complex. First, biotin carboxylase catalyzes the carboxylation of biotin on its carrier protein (BCCP) and then the CO(2) group is transferred by the carboxyltransferase to acetyl-CoA to form malonyl-CoA. The sequence is that of Acetyl-coenzyme A carboxylase carboxyl transferase subunit alpha from Cupriavidus necator (strain ATCC 17699 / DSM 428 / KCTC 22496 / NCIMB 10442 / H16 / Stanier 337) (Ralstonia eutropha).